The primary structure comprises 36 residues: Collagen alpha-2(I) chain (36 aa).

Positions 1–36 (GSNGEPGSAGPPGPAGLRGLPGESGAVGPAGPPGSR) are disordered. Pro6 and Pro12 each carry 4-hydroxyproline. Low complexity predominate over residues 15-29 (AGLRGLPGESGAVGP). Pro33 carries the 4-hydroxyproline modification.

The protein belongs to the fibrillar collagen family. Trimers of one alpha 2(I) and two alpha 1(I) chains. Proline residues at the third position of the tripeptide repeating unit (G-X-Y) are hydroxylated in some or all of the chains.

It is found in the secreted. It localises to the extracellular space. The protein resides in the extracellular matrix. In terms of biological role, type I collagen is a member of group I collagen (fibrillar forming collagen). The sequence is that of Collagen alpha-2(I) chain from Brachylophosaurus canadensis (Campanian hadrosaur).